Here is an 806-residue protein sequence, read N- to C-terminus: Fibroblast growth factor receptor 3 (806 aa).

The first 19 residues, 1 to 19 (MRAAWGSVWCLCLAAAVGA), serve as a signal peptide directing secretion. Residues 20-364 (LPAARRRGAE…ELMEMDDSGS (345 aa)) are Extracellular-facing. An Ig-like C2-type 1 domain is found at 24–124 (RRRGAERSGG…VLGNFTVRVT (101 aa)). The cysteines at positions 61 and 107 are disulfide-linked. N-linked (GlcNAc...) asparagine glycosylation is found at N83, N96, and N118. Residues 121–146 (VRVTDSPSSGDDEDDDDESEDTGVPF) are disordered. Positions 130–141 (GDDEDDDDESED) are enriched in acidic residues. Ig-like C2-type domains lie at 150–238 (PDKM…YQLD) and 247–349 (PILQ…AWLT). A disulfide bridge links C170 with C222. N219, N256, N288, N309, and N322 each carry an N-linked (GlcNAc...) asparagine glycan. C269 and C333 are disulfide-bonded. A helical transmembrane segment spans residues 365–389 (VYAGILSYGTGLVLFILVLVIVIIC). The Cytoplasmic segment spans residues 390 to 806 (RMKMPNKKAM…HVPCNGVIRT (417 aa)). One can recognise a Protein kinase domain in the interval 466–755 (LTLGKPLGEG…LTMTSTDEYL (290 aa)). ATP-binding positions include 472–480 (LGEGCFGQV) and K502. D611 serves as the catalytic Proton acceptor. 4 positions are modified to phosphotyrosine; by autocatalysis: Y641, Y642, Y718, and Y754.

It belongs to the protein kinase superfamily. Tyr protein kinase family. Fibroblast growth factor receptor subfamily. As to quaternary structure, monomer. Homodimer after ligand binding. Autophosphorylated. Binding of FGF family members together with heparan sulfate proteoglycan or heparin promotes receptor dimerization and autophosphorylation on tyrosine residues. Autophosphorylation occurs in trans between the two FGFR molecules present in the dimer.

It is found in the cell membrane. The enzyme catalyses L-tyrosyl-[protein] + ATP = O-phospho-L-tyrosyl-[protein] + ADP + H(+). Its activity is regulated as follows. Present in an inactive conformation in the absence of bound ligand. Ligand binding leads to dimerization and activation by autophosphorylation on tyrosine residues. Tyrosine-protein kinase that acts as a cell-surface receptor for fibroblast growth factors and plays an essential role in the regulation of cell proliferation, differentiation and apoptosis. Plays an essential role in the regulation of chondrocyte differentiation, proliferation and apoptosis, and is required for normal skeleton development. Regulates both osteogenesis and postnatal bone mineralization by osteoblasts. Promotes apoptosis in chondrocytes, but can also promote cancer cell proliferation. Phosphorylates PLCG1, CBL and FRS2. Ligand binding leads to the activation of several signaling cascades. Activation of PLCG1 leads to the production of the cellular signaling molecules diacylglycerol and inositol 1,4,5-trisphosphate. Phosphorylation of FRS2 triggers recruitment of GRB2, GAB1, PIK3R1 and SOS1, and mediates activation of RAS, MAPK1/ERK2, MAPK3/ERK1 and the MAP kinase signaling pathway, as well as of the AKT1 signaling pathway. This Gallus gallus (Chicken) protein is Fibroblast growth factor receptor 3 (FGFR3).